Here is a 236-residue protein sequence, read N- to C-terminus: Uridylate kinase (236 aa).

10–13 (KLSG) contributes to the ATP binding site. A UMP-binding site is contributed by G52. ATP is bound by residues G53 and R57. Residues D72 and 133-140 (TGNPFFTT) each bind UMP. T160, Y166, and D169 together coordinate ATP.

This sequence belongs to the UMP kinase family. In terms of assembly, homohexamer.

The protein resides in the cytoplasm. It catalyses the reaction UMP + ATP = UDP + ADP. Its pathway is pyrimidine metabolism; CTP biosynthesis via de novo pathway; UDP from UMP (UMPK route): step 1/1. Its activity is regulated as follows. Inhibited by UTP. Functionally, catalyzes the reversible phosphorylation of UMP to UDP. This is Uridylate kinase from Parabacteroides distasonis (strain ATCC 8503 / DSM 20701 / CIP 104284 / JCM 5825 / NCTC 11152).